A 544-amino-acid polypeptide reads, in one-letter code: Chaperonin GroEL (544 aa).

Residues 29-32, 86-90, Gly413, 478-480, and Asp494 contribute to the ATP site; these read TIGP, DGTTT, and NAA.

Belongs to the chaperonin (HSP60) family. Forms a cylinder of 14 subunits composed of two heptameric rings stacked back-to-back. Interacts with the co-chaperonin GroES.

Its subcellular location is the cytoplasm. It carries out the reaction ATP + H2O + a folded polypeptide = ADP + phosphate + an unfolded polypeptide.. Together with its co-chaperonin GroES, plays an essential role in assisting protein folding. The GroEL-GroES system forms a nano-cage that allows encapsulation of the non-native substrate proteins and provides a physical environment optimized to promote and accelerate protein folding. This chain is Chaperonin GroEL, found in Exiguobacterium sp. (strain ATCC BAA-1283 / AT1b).